A 362-amino-acid chain; its full sequence is Mortality factor 4-like protein 1 (362 aa).

A Tudor-knot domain is found at 12–51 (QEGERVLCFHGPLLYEAKCVKVAIKDKQVKYFIHYSGWNK). An interaction with KAT8 region spans residues 26-62 (YEAKCVKVAIKDKQVKYFIHYSGWNKKSAVRPRRSEK). Residues 113–182 (RELQKANQEQ…RKKRARVDPT (70 aa)) form a disordered region. The tract at residues 133–266 (PGKKTSGLQQ…VAGIKEYFNV (134 aa)) is sufficient for interaction with SIN3A. A Nuclear localization signal motif is present at residues 135-146 (KKTSGLQQKNVE). Lysine 143 is subject to N6-acetyllysine. The interaction with RB1-1 stretch occupies residues 164 to 230 (STSETPQPPR…FYLPAKKNVD (67 aa)). Positions 188 to 342 (TFMNRVEVKV…FLKYLAKNSA (155 aa)) are sufficient for interaction with PHF12. Residues 191-362 (NRVEVKVKIP…APPEYHRKAV (172 aa)) form the MRG domain. The segment at 323 to 344 (LALLLNYLHDFLKYLAKNSATL) is interaction with RB1-2.

Component of the NuA4 histone acetyltransferase complex which contains the catalytic subunit KAT5/TIP60 and the subunits EP400, TRRAP/PAF400, BRD8/SMAP, EPC1, DMAP1/DNMAP1, RUVBL1/TIP49, RUVBL2, ING3, actin, ACTL6A/BAF53A, MORF4L1/MRG15, MORF4L2/MRGX, MRGBP, YEATS4/GAS41, VPS72/YL1 and MEAF6. The NuA4 complex interacts with MYC and the adenovirus E1A protein. MORF4L1 may also participate in the formation of NuA4 related complexes which lack the KAT5/TIP60 catalytic subunit, but which include the SWI/SNF related protein SRCAP. Component of the mSin3A histone deacetylase complex, which includes SIN3A, HDAC2, ARID4B, MORF4L1, RBBP4/RbAp48, and RBBP7/RbAp46. May also interact with PHF12 and one or more as yet undefined members of the TLE (transducin-like enhancer of split) family of transcriptional repressors. Component of the SIN3B complex, which includes SIN3B, HDAC2 or HDAC1, PHF12 and MORF4L1. Interacts with RB1 and KAT8. Interacts with the N-terminus of MRFAP1. Found in a complex composed of MORF4L1, MRFAP1 and RB1. Interacts with the entire BRCA complex, which contains BRCA1, PALB2, BRCA2 and RAD51. Interacts with PALB2. Forms a complex with MSL1 and NUPR1.

The protein localises to the nucleus. In terms of biological role, component of the NuA4 histone acetyltransferase (HAT) complex which is involved in transcriptional activation of select genes principally by acetylation of nucleosomal histones H4 and H2A. This modification may both alter nucleosome - DNA interactions and promote interaction of the modified histones with other proteins which positively regulate transcription. This complex may be required for the activation of transcriptional programs associated with oncogene and proto-oncogene mediated growth induction, tumor suppressor mediated growth arrest and replicative senescence, apoptosis, and DNA repair. The NuA4 complex ATPase and helicase activities seem to be, at least in part, contributed by the association of RUVBL1 and RUVBL2 with EP400. NuA4 may also play a direct role in DNA repair when directly recruited to sites of DNA damage. As part of the SIN3B complex represses transcription and counteracts the histone acetyltransferase activity of EP300 through the recognition H3K27ac marks by PHF12 and the activity of the histone deacetylase HDAC2. SIN3B complex is recruited downstream of the constitutively active genes transcriptional start sites through interaction with histones and mitigates histone acetylation and RNA polymerase II progression within transcribed regions contributing to the regulation of transcription. Required for homologous recombination repair (HRR) and resistance to mitomycin C (MMC). Involved in the localization of PALB2, BRCA2 and RAD51, but not BRCA1, to DNA-damage foci. The polypeptide is Mortality factor 4-like protein 1 (Morf4l1) (Mus musculus (Mouse)).